Here is a 228-residue protein sequence, read N- to C-terminus: Phosphoglycolate phosphatase (228 aa).

The Nucleophile role is filled by Asp-9. Positions 9 and 11 each coordinate Mg(2+). A substrate-binding site is contributed by Lys-151. Residues Asp-174 and Asp-178 each coordinate Mg(2+).

This sequence belongs to the archaeal SPP-like hydrolase family. It depends on Mg(2+) as a cofactor.

It catalyses the reaction 2-phosphoglycolate + H2O = glycolate + phosphate. In terms of biological role, catalyzes the dephosphorylation of 2-phosphoglycolate. In Pyrobaculum aerophilum (strain ATCC 51768 / DSM 7523 / JCM 9630 / CIP 104966 / NBRC 100827 / IM2), this protein is Phosphoglycolate phosphatase.